Here is a 777-residue protein sequence, read N- to C-terminus: Proton-coupled zinc antiporter SLC30A5 (777 aa).

At 1-28 (MEEKYSSNVMSSGRLGPVDAPESRLTRY) the chain is on the cytoplasmic side. A helical membrane pass occupies residues 29–49 (IVLLCFTKFLKALGIFESYDL). The Lumenal segment spans residues 50 to 52 (LKV). A helical membrane pass occupies residues 53 to 73 (VHIVQFIFILKLGSTCFMVLF). Over 74–94 (QKPFSSGKSITKRQWVSIVKH) the chain is Cytoplasmic. Residues 95 to 115 (AFVSCIISLLWFFGLTLCGPL) form a helical membrane-spanning segment. Topologically, residues 116–117 (RT) are lumenal. A helical membrane pass occupies residues 118–138 (LLLFEHSDIVVISLLTVLFTG). The Cytoplasmic segment spans residues 139–148 (SGGGPSKTRG). A helical transmembrane segment spans residues 149–169 (AAFFIIAVICLLLFDNDDLMA). Residues 170 to 189 (KIAEHPEGHHDSALTHFLYR) are Lumenal-facing. The chain crosses the membrane as a helical span at residues 190-210 (AFFLLGVADHKGGVLLLVLAL). The Cytoplasmic segment spans residues 211 to 234 (CFNVGFHTASRKLSLDIGGAKRLQ). The helical transmembrane segment at 235-255 (ALSHLVSVIILSPWVIILSAT) threads the bilayer. The Lumenal portion of the chain corresponds to 256–263 (TESKIESW). Residues 264–284 (SALIMPFMTVIFSVMIMDFYV) form a helical membrane-spanning segment. Topologically, residues 285–299 (ESVCSVKMEPSKCAR) are cytoplasmic. Residues 300 to 320 (YGSFLIFASALLLGNFWTHPI) form a helical membrane-spanning segment. Residues 321–338 (TDQLRAMNKPAHQLHTEH) are Lumenal-facing. A helical membrane pass occupies residues 339 to 359 (VLSGGVVVSAIFFILSAQILA). Residues 360-414 (SSSRKGQRGTLVGYSPEGTPLYNFMGDALHNTSPSMPRFLKDSLKQILEEYDSRQ) are Cytoplasmic-facing. A helical transmembrane segment spans residues 415–435 (IFYFLCLNLAFTFVEIFYGVW). At 436–444 (TNSLGLLSD) the chain is on the lumenal side. Residues 445–465 (GFHMLFDCSALVMGLIAALMT) form a helical membrane-spanning segment. Positions 447 and 451 each coordinate Zn(2+). Residues 466-484 (RWKATRIFSYGYGRVEILS) are Cytoplasmic-facing. Residues 485–505 (GFINGLFLVVIAFFVFIEAVA) traverse the membrane as a helical segment. At 506 to 516 (RIYDPPDINTD) the chain is on the lumenal side. Residues 517 to 537 (MLTPVSVGGLIVNLVGICAFS) form a helical membrane-spanning segment. Residues 538 to 586 (HAHSHGAARGGCPSHDHGHSHHGHGHSHGHNHGHSHSDHGHNHGHTHNH) form a his-rich loop; required for zinc transport region. Residues 538 to 604 (HAHSHGAARG…VGMNANMRGV (67 aa)) lie on the Cytoplasmic side of the membrane. A disordered region spans residues 547 to 593 (GGCPSHDHGHSHHGHGHSHGHNHGHSHSDHGHNHGHTHNHGHSHGSA). Composition is skewed to basic residues over residues 555–571 (GHSH…NHGH) and 579–589 (NHGHTHNHGHS). The helical transmembrane segment at 605–625 (FSHVLADTLGSVGVIVSTILI) threads the bilayer. The Zn(2+) site is built by His607 and Asp611. Residues 626–629 (RQFG) lie on the Lumenal side of the membrane. A helical transmembrane segment spans residues 630–650 (WLIADPLCSLFIAVLIFGSVL). The Cytoplasmic portion of the chain corresponds to 651–777 (PLLKDACQVI…KYYKDGTYIM (127 aa)).

This sequence belongs to the cation diffusion facilitator (CDF) transporter (TC 2.A.4) family. SLC30A subfamily. Heterodimer with SLC30A6/ZNT6; form a functional zinc ion transmembrane transporter.

The protein resides in the golgi apparatus. It is found in the golgi stack membrane. Its subcellular location is the cytoplasmic vesicle. It localises to the COPII-coated vesicle membrane. The protein localises to the secretory vesicle membrane. The protein resides in the trans-Golgi network membrane. The catalysed reaction is Zn(2+)(in) + 2 H(+)(out) = Zn(2+)(out) + 2 H(+)(in). Together with SLC30A6 forms a functional proton-coupled zinc ion antiporter mediating zinc entry into the lumen of organelles along the secretory pathway. By contributing to zinc ion homeostasis within the early secretory pathway, regulates the activation and folding of enzymes like alkaline phosphatases and enzymes involved in phosphatidylinositol glycan anchor biosynthesis. The polypeptide is Proton-coupled zinc antiporter SLC30A5 (slc30a5) (Xenopus tropicalis (Western clawed frog)).